The sequence spans 184 residues: Protein Syd (184 aa).

The protein belongs to the Syd family.

Its subcellular location is the cell inner membrane. Its function is as follows. Interacts with the SecY protein in vivo. May bind preferentially to an uncomplexed state of SecY, thus functioning either as a chelating agent for excess SecY in the cell or as a regulatory factor that negatively controls the translocase function. The chain is Protein Syd from Psychromonas ingrahamii (strain DSM 17664 / CCUG 51855 / 37).